The chain runs to 338 residues: Heat-inducible transcription repressor HrcA (338 aa).

Belongs to the HrcA family.

Functionally, negative regulator of class I heat shock genes (grpE-dnaK-dnaJ and groELS operons). Prevents heat-shock induction of these operons. This chain is Heat-inducible transcription repressor HrcA, found in Nitrosomonas eutropha (strain DSM 101675 / C91 / Nm57).